The following is a 130-amino-acid chain: L-aspartate semialdehyde sulfurtransferase iron-sulfur subunit (130 aa).

4Fe-4S ferredoxin-type domains follow at residues 72–101 (RPIH…FDET) and 102–130 (WSLC…KLGE). 8 residues coordinate [4Fe-4S] cluster: C81, C84, C87, C91, C111, C114, C117, and C121.

May form a complex with MA_1821. Requires [4Fe-4S] cluster as cofactor.

The protein operates within amino-acid biosynthesis. Required for O-acetylhomoserine sulfhydrylase (OAHS)-independent homocysteine (Hcy) biosynthesis. Together with MA_1821, catalyzes the condensation of sulfide with aspartate semialdehyde to generate homocysteine. May be involved in the reduction of the disulfide formed in MA_1821. In Methanosarcina acetivorans (strain ATCC 35395 / DSM 2834 / JCM 12185 / C2A), this protein is L-aspartate semialdehyde sulfurtransferase iron-sulfur subunit.